The following is a 163-amino-acid chain: MNEMSLAELWVAVAFLLFVGILIYVGAHRAIGSALDSRGQRIAAELEEARRLKEEAQKLVAEFKRKQREAEAEAESIVTAAKAEAERLASEAKAKLEDFVTRRTKMAEDKIAQAELQAVADVKAIAADAAAKAAEVLLGSAARGDVGDRLISNAIGEVKTKLN.

A helical transmembrane segment spans residues 6–26; sequence LAELWVAVAFLLFVGILIYVG.

Belongs to the ATPase B chain family. F-type ATPases have 2 components, F(1) - the catalytic core - and F(0) - the membrane proton channel. F(1) has five subunits: alpha(3), beta(3), gamma(1), delta(1), epsilon(1). F(0) has three main subunits: a(1), b(2) and c(10-14). The alpha and beta chains form an alternating ring which encloses part of the gamma chain. F(1) is attached to F(0) by a central stalk formed by the gamma and epsilon chains, while a peripheral stalk is formed by the delta and b chains.

It localises to the cell inner membrane. Its function is as follows. F(1)F(0) ATP synthase produces ATP from ADP in the presence of a proton or sodium gradient. F-type ATPases consist of two structural domains, F(1) containing the extramembraneous catalytic core and F(0) containing the membrane proton channel, linked together by a central stalk and a peripheral stalk. During catalysis, ATP synthesis in the catalytic domain of F(1) is coupled via a rotary mechanism of the central stalk subunits to proton translocation. Component of the F(0) channel, it forms part of the peripheral stalk, linking F(1) to F(0). The protein is ATP synthase subunit b 1 of Xanthobacter autotrophicus (strain ATCC BAA-1158 / Py2).